The sequence spans 47 residues: Small, acid-soluble spore protein K (47 aa).

Residues 1 to 47 (MRNKAHGFPHRISFDGEPDRAKHASKRANGTINTKPQERMHQANPDQ) are disordered. The span at 12–22 (ISFDGEPDRAK) shows a compositional bias: basic and acidic residues.

This sequence belongs to the SspK family.

The protein resides in the spore core. The sequence is that of Small, acid-soluble spore protein K from Halalkalibacterium halodurans (strain ATCC BAA-125 / DSM 18197 / FERM 7344 / JCM 9153 / C-125) (Bacillus halodurans).